Consider the following 236-residue polypeptide: 2-C-methyl-D-erythritol 4-phosphate cytidylyltransferase (236 aa).

This sequence belongs to the IspD/TarI cytidylyltransferase family. IspD subfamily. In terms of assembly, homodimer.

It carries out the reaction 2-C-methyl-D-erythritol 4-phosphate + CTP + H(+) = 4-CDP-2-C-methyl-D-erythritol + diphosphate. It functions in the pathway isoprenoid biosynthesis; isopentenyl diphosphate biosynthesis via DXP pathway; isopentenyl diphosphate from 1-deoxy-D-xylulose 5-phosphate: step 2/6. In terms of biological role, catalyzes the formation of 4-diphosphocytidyl-2-C-methyl-D-erythritol from CTP and 2-C-methyl-D-erythritol 4-phosphate (MEP). This chain is 2-C-methyl-D-erythritol 4-phosphate cytidylyltransferase, found in Escherichia coli O139:H28 (strain E24377A / ETEC).